Consider the following 407-residue polypeptide: Tryptophan synthase beta chain (407 aa).

K91 carries the N6-(pyridoxal phosphate)lysine modification.

It belongs to the TrpB family. In terms of assembly, tetramer of two alpha and two beta chains. Pyridoxal 5'-phosphate serves as cofactor.

The catalysed reaction is (1S,2R)-1-C-(indol-3-yl)glycerol 3-phosphate + L-serine = D-glyceraldehyde 3-phosphate + L-tryptophan + H2O. It participates in amino-acid biosynthesis; L-tryptophan biosynthesis; L-tryptophan from chorismate: step 5/5. In terms of biological role, the beta subunit is responsible for the synthesis of L-tryptophan from indole and L-serine. The polypeptide is Tryptophan synthase beta chain (Streptococcus pneumoniae (strain P1031)).